The chain runs to 327 residues: Phenylalanine--tRNA ligase alpha subunit (327 aa).

Residue E252 participates in Mg(2+) binding.

Belongs to the class-II aminoacyl-tRNA synthetase family. Phe-tRNA synthetase alpha subunit type 1 subfamily. As to quaternary structure, tetramer of two alpha and two beta subunits. Mg(2+) serves as cofactor.

The protein localises to the cytoplasm. It carries out the reaction tRNA(Phe) + L-phenylalanine + ATP = L-phenylalanyl-tRNA(Phe) + AMP + diphosphate + H(+). The protein is Phenylalanine--tRNA ligase alpha subunit of Shewanella baltica (strain OS223).